The chain runs to 496 residues: L-arabinose isomerase (496 aa).

Mn(2+) is bound by residues glutamate 306, glutamate 331, histidine 348, and histidine 447.

The protein belongs to the arabinose isomerase family. It depends on Mn(2+) as a cofactor.

It catalyses the reaction beta-L-arabinopyranose = L-ribulose. The protein operates within carbohydrate degradation; L-arabinose degradation via L-ribulose; D-xylulose 5-phosphate from L-arabinose (bacterial route): step 1/3. Functionally, catalyzes the conversion of L-arabinose to L-ribulose. In Geobacillus kaustophilus (strain HTA426), this protein is L-arabinose isomerase.